The sequence spans 363 residues: NAD(P)H-quinone oxidoreductase subunit 1, chloroplastic (363 aa).

The next 6 membrane-spanning stretches (helical) occupy residues 30–50 (LVPI…IVWL), 98–118 (FSIG…IIPF), 129–149 (IGVF…LMSG), 248–268 (YSGI…LVSS), 300–320 (VFGT…FLFI), and 336–356 (LLNL…LLTT).

The protein belongs to the complex I subunit 1 family. NDH is composed of at least 16 different subunits, 5 of which are encoded in the nucleus.

It localises to the plastid. The protein localises to the chloroplast thylakoid membrane. The catalysed reaction is a plastoquinone + NADH + (n+1) H(+)(in) = a plastoquinol + NAD(+) + n H(+)(out). It catalyses the reaction a plastoquinone + NADPH + (n+1) H(+)(in) = a plastoquinol + NADP(+) + n H(+)(out). Its function is as follows. NDH shuttles electrons from NAD(P)H:plastoquinone, via FMN and iron-sulfur (Fe-S) centers, to quinones in the photosynthetic chain and possibly in a chloroplast respiratory chain. The immediate electron acceptor for the enzyme in this species is believed to be plastoquinone. Couples the redox reaction to proton translocation, and thus conserves the redox energy in a proton gradient. This is NAD(P)H-quinone oxidoreductase subunit 1, chloroplastic from Vitis vinifera (Grape).